A 356-amino-acid polypeptide reads, in one-letter code: Histidinol-phosphate aminotransferase 1 (356 aa).

At lysine 210 the chain carries N6-(pyridoxal phosphate)lysine.

The protein belongs to the class-II pyridoxal-phosphate-dependent aminotransferase family. Histidinol-phosphate aminotransferase subfamily. In terms of assembly, homodimer. It depends on pyridoxal 5'-phosphate as a cofactor.

The catalysed reaction is L-histidinol phosphate + 2-oxoglutarate = 3-(imidazol-4-yl)-2-oxopropyl phosphate + L-glutamate. It participates in amino-acid biosynthesis; L-histidine biosynthesis; L-histidine from 5-phospho-alpha-D-ribose 1-diphosphate: step 7/9. This chain is Histidinol-phosphate aminotransferase 1, found in Hydrogenovibrio crunogenus (strain DSM 25203 / XCL-2) (Thiomicrospira crunogena).